A 218-amino-acid chain; its full sequence is MQADLSNIIALYGGSFDPLHYAHMEIIRLLRENLLYKRIILMPNYRNPLKSSSFFTPLQRLQMCKILADEMNNAKSCNQKIPYISVSDYEVCQNRSVFSVQSVAFIKEQITKQDTNAQLVFVLGEDSFNNLKQWKDVEKLCKMVDFVLIKREISQKDSQISPHIVPYAHVIKCLDLPPSVAHFSSSSVRSLLQKGQIDEALNLVPVCLHTFIKANFRL.

Belongs to the NadD family.

It carries out the reaction nicotinate beta-D-ribonucleotide + ATP + H(+) = deamido-NAD(+) + diphosphate. It functions in the pathway cofactor biosynthesis; NAD(+) biosynthesis; deamido-NAD(+) from nicotinate D-ribonucleotide: step 1/1. Catalyzes the reversible adenylation of nicotinate mononucleotide (NaMN) to nicotinic acid adenine dinucleotide (NaAD). This is Probable nicotinate-nucleotide adenylyltransferase from Helicobacter hepaticus (strain ATCC 51449 / 3B1).